The following is a 308-amino-acid chain: Protoheme IX farnesyltransferase (308 aa).

Helical transmembrane passes span 31-51 (VGIV…AFYF), 60-80 (LDIV…SCVI), 110-130 (ALWF…MTNL), 131-151 (TAAG…TMWS), 157-177 (VNTI…WTAV), 185-205 (AWVL…ALAI), 232-252 (IIIW…LGLP), 253-273 (IVIL…VGYR), and 285-305 (FVYS…FTLF).

This sequence belongs to the UbiA prenyltransferase family. Protoheme IX farnesyltransferase subfamily. Interacts with CtaA.

The protein resides in the cell membrane. It carries out the reaction heme b + (2E,6E)-farnesyl diphosphate + H2O = Fe(II)-heme o + diphosphate. It participates in porphyrin-containing compound metabolism; heme O biosynthesis; heme O from protoheme: step 1/1. Its function is as follows. Converts heme B (protoheme IX) to heme O by substitution of the vinyl group on carbon 2 of heme B porphyrin ring with a hydroxyethyl farnesyl side group. This chain is Protoheme IX farnesyltransferase, found in Bacillus licheniformis (strain ATCC 14580 / DSM 13 / JCM 2505 / CCUG 7422 / NBRC 12200 / NCIMB 9375 / NCTC 10341 / NRRL NRS-1264 / Gibson 46).